The sequence spans 129 residues: Small ribosomal subunit protein uS11 (129 aa).

The protein belongs to the universal ribosomal protein uS11 family. Part of the 30S ribosomal subunit. Interacts with proteins S7 and S18. Binds to IF-3.

In terms of biological role, located on the platform of the 30S subunit, it bridges several disparate RNA helices of the 16S rRNA. Forms part of the Shine-Dalgarno cleft in the 70S ribosome. The chain is Small ribosomal subunit protein uS11 from Methylobacterium sp. (strain 4-46).